The chain runs to 179 residues: Large ribosomal subunit protein uL10 (179 aa).

Belongs to the universal ribosomal protein uL10 family. Part of the ribosomal stalk of the 50S ribosomal subunit. The N-terminus interacts with L11 and the large rRNA to form the base of the stalk. The C-terminus forms an elongated spine to which L12 dimers bind in a sequential fashion forming a multimeric L10(L12)X complex.

Its function is as follows. Forms part of the ribosomal stalk, playing a central role in the interaction of the ribosome with GTP-bound translation factors. This is Large ribosomal subunit protein uL10 from Thermotoga petrophila (strain ATCC BAA-488 / DSM 13995 / JCM 10881 / RKU-1).